A 314-amino-acid polypeptide reads, in one-letter code: MVPRVPQPGIWCPAVTFFDSKTDTLDLASQERYYAYLARSGLTGLVILGTNAEAFLLTREERAQLIATARKAVGPDFPIMAGVGAHSTRQVLEHINDASVAGANYVLVLPPAYFGKATTPPVIKSFFDDVSCQSPLPVVIYNFPGVCNGIDLDSDMITTIARKNPNVVGVKLTCASVGKITRLAATLPPAAFSVFGGQSDFLIGGLSVGSAGCIAAFANVFPKTVSKIYELYKAGKVDQAMELHRKAALAESPCKSGIATTKYAAAIFSAKAAGIEDAEEKLRPRKPYDPPSEAAKQEVRKVMAEVAAIEAGLS.

50 to 51 (TN) provides a ligand contact to substrate. Catalysis depends on Lys171, which acts as the Schiff-base intermediate with substrate.

Belongs to the DapA family.

The enzyme catalyses (4S)-4-hydroxy-2-oxoglutarate = glyoxylate + pyruvate. It catalyses the reaction (4R)-4-hydroxy-2-oxoglutarate = glyoxylate + pyruvate. In terms of biological role, may catalyze the final step in the metabolic pathway of hydroxyproline. In Coccidioides immitis (strain RS) (Valley fever fungus), this protein is Putative 4-hydroxy-2-oxoglutarate aldolase, mitochondrial.